Here is a 691-residue protein sequence, read N- to C-terminus: Two-component response regulator ORR21 (691 aa).

The region spanning 17 to 132 (KVLVVDDDPT…ELKNIWQHVI (116 aa)) is the Response regulatory domain. A 4-aspartylphosphate modification is found at D68. A compositionally biased stretch (basic and acidic residues) spans 139–155 (NKEHEHSGSLDDTDRTR). Disordered regions lie at residues 139 to 204 (NKEH…KKPR) and 616 to 647 (SHPG…HGFV). Residues 199–258 (TSKKPRVVWSVELHQQFVNAVNHLGIDKAVPKKILELMNVPGLTRENVASHLQKFRLYLK) constitute a DNA-binding region (myb-like GARP). Positions 616 to 628 (SHPGSSSSSFQSS) are enriched in low complexity.

This sequence belongs to the ARR family. Type-B subfamily. Post-translationally, two-component system major event consists of a His-to-Asp phosphorelay between a sensor histidine kinase (HK) and a response regulator (RR). In plants, the His-to-Asp phosphorelay involves an additional intermediate named Histidine-containing phosphotransfer protein (HPt). This multistep phosphorelay consists of a His-Asp-His-Asp sequential transfer of a phosphate group between first a His and an Asp of the HK protein, followed by the transfer to a conserved His of the HPt protein and finally the transfer to an Asp in the receiver domain of the RR protein.

The protein resides in the nucleus. Transcriptional activator that binds specific DNA sequence. Functions as a response regulator involved in His-to-Asp phosphorelay signal transduction system. Phosphorylation of the Asp residue in the receiver domain activates the ability of the protein to promote the transcription of target genes. May directly activate some type-A response regulators in response to cytokinins. The polypeptide is Two-component response regulator ORR21 (Oryza sativa subsp. indica (Rice)).